Reading from the N-terminus, the 246-residue chain is Probable S-methyl-5'-thioinosine phosphorylase (246 aa).

Phosphate is bound by residues Thr-10 and 52-53; that span reads RH. Met-185 is a substrate binding site. Thr-186 lines the phosphate pocket. Substrate is bound at residue 209-211; that stretch reads NPA.

Belongs to the PNP/MTAP phosphorylase family. MTAP subfamily. Homotrimer.

It catalyses the reaction S-methyl-5'-thioinosine + phosphate = 5-(methylsulfanyl)-alpha-D-ribose 1-phosphate + hypoxanthine. It participates in purine metabolism; purine nucleoside salvage. Functionally, catalyzes the reversible phosphorylation of S-methyl-5'-thioinosine (MTI) to hypoxanthine and 5-methylthioribose-1-phosphate. Involved in the breakdown of S-methyl-5'-thioadenosine (MTA), a major by-product of polyamine biosynthesis. Catabolism of (MTA) occurs via deamination to MTI and phosphorolysis to hypoxanthine. In Pseudomonas syringae pv. tomato (strain ATCC BAA-871 / DC3000), this protein is Probable S-methyl-5'-thioinosine phosphorylase.